A 182-amino-acid polypeptide reads, in one-letter code: MSMKGKETMSDERIVVGKFGSTYGIRGWLKVFSYTDNAESLFDYSPWYVNQKGEWVEFKVESWKRHNKGMVAKLEGLDVREDAHLLTNLEIAIDPAVLPELSEDEFYWRELFGMQVVTTNGYDLGVVTDMLETGSNDVLVVKANLKDAFGQKERLIPFLEEQVIIKVDREAQRIEVDWDPGF.

Positions 103-182 constitute a PRC barrel domain; sequence EDEFYWRELF…RIEVDWDPGF (80 aa).

This sequence belongs to the RimM family. As to quaternary structure, binds ribosomal protein uS19.

It localises to the cytoplasm. Functionally, an accessory protein needed during the final step in the assembly of 30S ribosomal subunit, possibly for assembly of the head region. Essential for efficient processing of 16S rRNA. May be needed both before and after RbfA during the maturation of 16S rRNA. It has affinity for free ribosomal 30S subunits but not for 70S ribosomes. This chain is Ribosome maturation factor RimM, found in Vibrio vulnificus (strain CMCP6).